Reading from the N-terminus, the 351-residue chain is Terpene cyclase sdgD (351 aa).

Helical transmembrane passes span 7–27, 62–82, 89–109, 126–146, 160–180, 193–213, 229–249, 281–301, and 316–336; these read INFI…TILI, TGVP…WPVI, LSLL…LLLL, WVGL…YCAI, IPHV…LVAL, VVVA…FMAS, IYIF…LASL, FLQW…VAVY, and LEVC…LLIW.

Belongs to the membrane-bound ascI terpene cyclase family.

It localises to the membrane. Its pathway is secondary metabolite biosynthesis. In terms of biological role, epoxide hydrolase; part of the gene cluster that mediates the biosynthesis of the polyenes aspernidgulenes. The carbon backbone of aspernidgulenes is synthesized by the HR-PKS sdgA, which accepts acetyl-CoA as the starter unit and performs malonyl-CoA extensions as well as regioselective methylation and reduction. The resulting nonaketide offloads the HR-PKS by intramolecular lactonization to yield the 5,6-dihydro-alpha-pyrone-containing hexaenoic acids preaspernidgulene A1 and A2. The FAD-dependent monooxygenase sdgC then installs the first epoxide on the penultimate double bond. Subsequently, the FAD-dependent monooxygenase sdgF presumably generates a ketone intermediate through Meinwald rearrangement involving a hydride shift. Next, sdgC introduces another epoxide on the last olefin of the ketone intermediate after E/Z isomerization. The epoxide hydrolase sdgD then catalyzes stereospecific cyclization of the 5,6-dihydro-alpha-pyrone and opening of the epoxide ring to form an oxygenated trimethylcyclopentanone and an oxabicyclo[2.2.1]heptane unit. Finally, the bicyclic unit undergoes hydrolytic cleavage, either spontaneously or catalyzed by sdgD, to assemble the dimethyl-gamma-lactone moiety in aspernidgulene A1. The sequence is that of Terpene cyclase sdgD from Emericella nidulans (strain FGSC A4 / ATCC 38163 / CBS 112.46 / NRRL 194 / M139) (Aspergillus nidulans).